The sequence spans 354 residues: uncharacterized protein (354 aa).

9 consecutive transmembrane segments (helical) span residues 9-29 (MGKIELHHVFVMLSCIYLIFS), 31-51 (ISINSAVVFLFSSIFFYISFT), 76-96 (NFGIFLMIVGLIAVTSDLIWV), 109-129 (FLNVYFTTLSHLFLVGWAIVV), 144-164 (IIFSILIMLLGYRTNVLVLLI), 185-205 (GILVFVILLGLSILRLYALGV), 278-298 (YGTLAIIPYFGILGIFLGFFY), 306-326 (GIYLGIYGILFAYTLIGIESG), and 327-347 (ILDIDVILYYFFGLILCIYAI).

The protein resides in the cell membrane. This is an uncharacterized protein from Methanocaldococcus jannaschii (strain ATCC 43067 / DSM 2661 / JAL-1 / JCM 10045 / NBRC 100440) (Methanococcus jannaschii).